The primary structure comprises 2388 residues: Hybrid signal transduction histidine kinase M (2388 aa).

8 disordered regions span residues 1–32 (MSNY…NNFN), 42–61 (FNTP…NSIS), 69–111 (NECN…STPI), 123–209 (NRSN…NAYP), 237–337 (TLLN…SPKL), 361–421 (SPHG…YNDN), 430–449 (TRNT…SSSF), and 486–542 (IYTP…NNNE). Residues 69-82 (NECNSGGEQSPKIK) are compositionally biased toward polar residues. 3 stretches are compositionally biased toward low complexity: residues 83-110 (TNNN…KSTP), 125-206 (SNLN…SNSN), and 242-288 (SSNN…NNGG). Residues 293 to 306 (QFISSDNKYNTVGN) show a composition bias toward polar residues. Residues 309 to 322 (HHHHHHQLHNHRHS) are compositionally biased toward basic residues. Low complexity-rich tracts occupy residues 325–337 (QGSS…SPKL), 361–399 (SPHG…NQNN), 410–419 (NNSNDSFDYN), and 432–449 (NTGY…SSSF). The span at 489 to 505 (PPYPQPYPQPPQLPPPS) shows a compositional bias: pro residues. Residues 506–541 (SSSSLSKENDNVDNNNTNNNNNNNNNNNNNNNNNNN) are compositionally biased toward low complexity. 4 consecutive transmembrane segments (helical) span residues 550-570 (TMNL…FLMV), 589-609 (FILI…LLVV), 645-665 (YIFL…NLFF), and 679-699 (NIST…SHIP). A disordered region spans residues 732–888 (NNDNKNKIND…NNNEEDDEEE (157 aa)). Residues 735–744 (NKNKINDKSD) are compositionally biased toward basic and acidic residues. Residues 745–880 (NSNSITNNNN…NNNNNNNNNN (136 aa)) are compositionally biased toward low complexity. A run of 3 helical transmembrane segments spans residues 896–916 (FQIF…LIVL), 953–973 (VQFQ…LLLV), and 1025–1045 (CSVG…WMSI). Positions 1093 to 1499 (RLVQNTGSII…VFELQVPMKC (407 aa)) constitute a Histidine kinase domain. A compositionally biased stretch (basic residues) spans 1236–1257 (PIHHHRHHHRHHHHHHHHHHHH). The interval 1236 to 1410 (PIHHHRHHHR…INNNINNNNN (175 aa)) is disordered. The span at 1260-1274 (DDDDYDDDNDDDNNT) shows a compositional bias: acidic residues. Residues 1286 to 1315 (LSDKIKDNQDENLELKKSNNDKIIENKENQ) show a composition bias toward basic and acidic residues. The segment covering 1316-1410 (ENNNNNNNNN…INNNINNNNN (95 aa)) has biased composition (low complexity). The Response regulatory 1 domain maps to 1541 to 1656 (KILVIDDNPN…QLTVLSQLLP (116 aa)). A 4-aspartylphosphate modification is found at Asp-1592. Disordered regions lie at residues 1666–1702 (SNQN…NIDF), 1960–2022 (GNNS…NSSN), 2036–2121 (CKGD…DIIN), 2133–2183 (QQQL…VKSS), and 2218–2256 (NQLN…NNND). Gly residues predominate over residues 1676 to 1696 (SNGGGGGGGGGGGGGGGGGSG). The segment covering 1974–1985 (TNNNTTTTTTTT) has biased composition (low complexity). The segment covering 1986–2010 (QPKKSPILTSSNGSDKSEGSTGSNR) has biased composition (polar residues). Residues 2054-2064 (DSSSSSSSSDS) are compositionally biased toward low complexity. The segment covering 2065 to 2076 (HGQDDHSYRLED) has biased composition (basic and acidic residues). Low complexity-rich tracts occupy residues 2078–2109 (SISS…SGIN) and 2133–2165 (QQQL…LPIP). Positions 2169-2183 (INSSGASSGIKVKSS) are enriched in polar residues. Residues 2262–2383 (NILLVEDNLV…LLISLLKKLV (122 aa)) form the Response regulatory 2 domain. A 4-aspartylphosphate modification is found at Asp-2313.

Activation probably requires transfer of a phosphate group between a histidine in the kinase core (transmitter) domain and an aspartate of the receiver domain.

It localises to the membrane. The enzyme catalyses ATP + protein L-histidine = ADP + protein N-phospho-L-histidine.. Its function is as follows. Acts as a receptor histidine kinase for a signal transduction pathway. This protein undergoes an ATP-dependent autophosphorylation at a conserved histidine residue in the kinase core, and a phosphoryl group is then transferred to a conserved aspartate residue in the receiver domain. This Dictyostelium discoideum (Social amoeba) protein is Hybrid signal transduction histidine kinase M (dhkM).